We begin with the raw amino-acid sequence, 632 residues long: Phosphatidylinositol 3,4,5-trisphosphate 3-phosphatase and protein-tyrosine-phosphatase PTEN2B (632 aa).

The span at 1-12 shows a compositional bias: polar residues; it reads METDPANSSSKS. The disordered stretch occupies residues 1-98; that stretch reads METDPANSSS…RESPPSIFSS (98 aa). Over residues 39 to 48 the composition is skewed to basic and acidic residues; sequence SAEREAHEDS. Residues 63-73 show a composition bias toward polar residues; sequence MPASSTGSEPL. Residues 87–98 show a composition bias toward low complexity; that stretch reads SPRESPPSIFSS. Residues 189–368 enclose the Phosphatase tensin-type domain; it reads RRYQEGEFDL…KYYERVQNQF (180 aa). C307 serves as the catalytic Phosphocysteine intermediate. The 128-residue stretch at 375 to 502 folds into the C2 tensin-type domain; the sequence is ERRCMLRGFR…FHVEIVMIEP (128 aa). Residues 504–603 are disordered; the sequence is NSQPTKSKSD…SGHYNPIPNN (100 aa). Residues 505–527 show a composition bias toward low complexity; sequence SQPTKSKSDSTQQQSQSSSSADS. A compositionally biased stretch (acidic residues) spans 535-549; it reads KDDDVFSDSDGEEEG. Residue S541 is modified to Phosphoserine. Over residues 550-571 the composition is skewed to polar residues; it reads NSQSYSTNEKTASSMHTTSKPH. Residues 584–594 show a composition bias toward low complexity; sequence ANRSVTSSSSS.

This sequence belongs to the PTEN phosphatase protein family. In terms of tissue distribution, expressed, at low levels, in seedlings, roots, stems, leaves, flowers and siliques. However, at protein level, not observed in older leaves, flowers and siliques.

The catalysed reaction is O-phospho-L-tyrosyl-[protein] + H2O = L-tyrosyl-[protein] + phosphate. The enzyme catalyses a 1,2-diacyl-sn-glycero-3-phospho-(1D-myo-inositol-3,4,5-trisphosphate) + H2O = a 1,2-diacyl-sn-glycero-3-phospho-(1D-myo-inositol-4,5-bisphosphate) + phosphate. Functionally, protein tyrosine phosphatase that also exhibits a weak lipid phosphatase activity towards PtdIns(3)P. This chain is Phosphatidylinositol 3,4,5-trisphosphate 3-phosphatase and protein-tyrosine-phosphatase PTEN2B, found in Arabidopsis thaliana (Mouse-ear cress).